Reading from the N-terminus, the 576-residue chain is Malonate--CoA ligase ACSF3, mitochondrial (576 aa).

The transit peptide at 1 to 83 (MLPHVVLTFR…RSLRLSQEIC (83 aa)) directs the protein to the mitochondrion. ATP is bound by residues 202 to 210 (TSGTTGRPK), aspartate 457, arginine 471, and lysine 563.

It belongs to the ATP-dependent AMP-binding enzyme family.

It localises to the mitochondrion. The enzyme catalyses tetracosanoate + ATP + CoA = tetracosanoyl-CoA + AMP + diphosphate. It catalyses the reaction malonate + ATP + CoA = malonyl-CoA + AMP + diphosphate. Catalyzes the initial reaction in intramitochondrial fatty acid synthesis, by activating malonate and methylmalonate, but not acetate, into their respective CoA thioester. May have some preference toward very-long-chain substrates. In Homo sapiens (Human), this protein is Malonate--CoA ligase ACSF3, mitochondrial.